Reading from the N-terminus, the 709-residue chain is Anillin-like protein 3 (709 aa).

The PH domain maps to 584–705 (DMEYRGFLHI…WLSAINDTLD (122 aa)).

This chain is Anillin-like protein 3 (ani-3), found in Caenorhabditis elegans.